Here is a 236-residue protein sequence, read N- to C-terminus: Hydantoin racemase (236 aa).

Homohexamer, homoheptamer or homooctamer.

It carries out the reaction a D-5-monosubstituted hydantoin = a L-5-monosubstituted hydantoin. It catalyses the reaction D-5-benzylhydantoin = L-5-benzylhydantoin. Completely inhibited by HgCl(2) and iodoacetamide. Stimulated by dithiothreitol. In terms of biological role, involved in the asymmetric conversion of racemic 5-substituted hydantoins to the corresponding L-amino acids. Catalyzes the racemization via enolization of D- and L-5-monosubstituted hydantoins. It shows preference for hydantoins with arylalkyl side chains such as 5-benzylhydantoin (BH) and, to a lesser extent, 5-(3-indolylmethylene)hydantoin (IMH). The sequence is that of Hydantoin racemase from Paenarthrobacter aurescens (Arthrobacter aurescens).